We begin with the raw amino-acid sequence, 62 residues long: Large ribosomal subunit protein bL28 (62 aa).

This sequence belongs to the bacterial ribosomal protein bL28 family.

The sequence is that of Large ribosomal subunit protein bL28 from Streptococcus mutans serotype c (strain ATCC 700610 / UA159).